The chain runs to 342 residues: Elongation factor Ts (342 aa).

Residues 80 to 83 (TDFV) are involved in Mg(2+) ion dislocation from EF-Tu.

Belongs to the EF-Ts family.

It is found in the cytoplasm. In terms of biological role, associates with the EF-Tu.GDP complex and induces the exchange of GDP to GTP. It remains bound to the aminoacyl-tRNA.EF-Tu.GTP complex up to the GTP hydrolysis stage on the ribosome. This Lactobacillus delbrueckii subsp. bulgaricus (strain ATCC 11842 / DSM 20081 / BCRC 10696 / JCM 1002 / NBRC 13953 / NCIMB 11778 / NCTC 12712 / WDCM 00102 / Lb 14) protein is Elongation factor Ts.